The chain runs to 176 residues: MFLIITRDTMFFTAMKNILSKGNVVHIQNEEEIDVMLHQNAFVIIDTLMNNVFHSNFLTQIERLKPVHVIIFSPFNIKRCLGKVPVTFVPRTITIIDFVALINGSYCSVPEAAVSLSRKQHQVLSCIANQMTTEDILEKLKISLKTFYCHKHNIMMILNLKRINELVRHQHIDYLV.

The HTH luxR-type domain maps to 109 to 174; the sequence is VPEAAVSLSR…ELVRHQHIDY (66 aa). Residues 133–152 constitute a DNA-binding region (H-T-H motif); sequence TEDILEKLKISLKTFYCHKH.

May act as a transcriptional regulator of dctA. This is HTH-type transcriptional regulator DctR (dctR) from Escherichia coli (strain K12).